We begin with the raw amino-acid sequence, 732 residues long: Trehalose phosphorylase (732 aa).

Positions methionine 1–serine 25 are excised as a propeptide.

It belongs to the glycosyltransferase group 1 family. Glycosyltransferase 4 subfamily. In terms of assembly, homodimer.

The enzyme catalyses alpha,alpha-trehalose + phosphate = alpha-D-glucose + alpha-D-glucose 1-phosphate. Its activity is regulated as follows. Activity abolished by 1 mM Cu(2+). 0.1 mM Cu(2+) reduces trehalose phosphorolysis to 76% and trehalose synthesis to 48% of maximum activity. 1 mM Zn(2+) abolishes trehalose synthesis, and reduces trehalose phosphorolysis to 40% of maximum activity. Unaffected by EDTA. Functionally, reversibly catalyzes the synthesis and degradation of trehalose from glucose and alpha-D-glucose 1-phosphate. The equilibrium lies in the direction of trehalose synthesis. The chain is Trehalose phosphorylase from Grifola frondosa (Maitake).